A 1121-amino-acid chain; its full sequence is Phosphatidylinositol 4-kinase beta 1 (1121 aa).

The region spanning methionine 1–alanine 143 is the PIK helical domain. Residues proline 187–glycine 207 show a composition bias toward polar residues. The segment at proline 187 to leucine 210 is disordered. 9 repeat units span residues alanine 212 to leucine 231, serine 244 to glutamate 263, proline 266 to aspartate 285, asparagine 288 to glutamate 306, serine 309 to glutamate 328, alanine 331 to glutamate 350, proline 353 to lysine 372, glutamate 380 to arginine 398, and aspartate 420 to lysine 438. The segment at alanine 212–aspartate 508 is 11 X 20 AA approximate repeats (PPC). Disordered regions lie at residues glutamate 343–glutamate 421, aspartate 435–proline 489, valine 506–serine 544, and alanine 794–methionine 825. Composition is skewed to basic and acidic residues over residues phenylalanine 358 to glutamate 376, aspartate 383 to glutamate 405, alanine 412 to glutamate 421, and aspartate 435 to aspartate 445. Over residues glycine 446–proline 455 the composition is skewed to acidic residues. Serine 449 and serine 454 each carry phosphoserine. Repeat copies occupy residues serine 454–lysine 472 and proline 489–aspartate 508. The span at isoleucine 466 to serine 475 shows a compositional bias: basic and acidic residues. Polar residues predominate over residues glutamate 476 to proline 489. The region spanning glutamate 835 to arginine 1106 is the PI3K/PI4K catalytic domain. Positions arginine 841–alanine 847 are G-loop. The interval glutamine 969 to asparagine 977 is catalytic loop. The activation loop stretch occupies residues histidine 988–threonine 1012.

The protein belongs to the PI3/PI4-kinase family. Type III PI4K subfamily. As to quaternary structure, interacts with AHK2, CBL1 and RABA4D. In terms of tissue distribution, expressed constitutively in leaves, roots, flowers, and stems.

It is found in the cell membrane. The protein resides in the golgi apparatus. Its subcellular location is the trans-Golgi network. It localises to the cytoplasmic vesicle membrane. The enzyme catalyses a 1,2-diacyl-sn-glycero-3-phospho-(1D-myo-inositol) + ATP = a 1,2-diacyl-sn-glycero-3-phospho-(1D-myo-inositol 4-phosphate) + ADP + H(+). Its activity is regulated as follows. Stimulated by phosphatidylinositol 4-phosphate (PtdIns4P). Slightly repressed by phosphatidyl-choline (PtdCho), wortmannin and adenosine. In terms of biological role, acts on phosphatidylinositol (PtdIns) in the first committed step in the production of the second messenger inositol-1,4,5-trisphosphate. Necessary for proper organization of the trans-Golgi network (TGN) and post-Golgi secretion in root hairs. Together with PI4KB2, required during polarized root hair expansion and pollen tube elongation. Functions redundantly with PI4KB2 upstream of the cold response phosphoinositide-dependent phospholipase C (PI-PLC) pathway. This chain is Phosphatidylinositol 4-kinase beta 1, found in Arabidopsis thaliana (Mouse-ear cress).